We begin with the raw amino-acid sequence, 206 residues long: Protease (206 aa).

Active-site residues include histidine 55, aspartate 72, and cysteine 122.

It belongs to the peptidase C5 family. In terms of assembly, interacts with protease cofactor pVI-C; this interaction is necessary for protease activation.

The protein localises to the virion. Its subcellular location is the host nucleus. The catalysed reaction is Cleaves proteins of the adenovirus and its host cell at two consensus sites: -Yaa-Xaa-Gly-Gly-|-Xaa- and -Yaa-Xaa-Gly-Xaa-|-Gly- (in which Yaa is Met, Ile or Leu, and Xaa is any amino acid).. With respect to regulation, requires DNA and protease cofactor for maximal activation. Inside nascent virions, becomes partially activated by binding to the viral DNA, allowing it to cleave the cofactor that binds to the protease and fully activates it. Actin, like the viral protease cofactor, seems to act as a cofactor in the cleavage of cytokeratin 18 and of actin itself. Functionally, cleaves viral precursor proteins (pTP, pIIIa, pVI, pVII, pVIII, and pX) inside newly assembled particles giving rise to mature virions. Protease complexed to its cofactor slides along the viral DNA to specifically locate and cleave the viral precursors. Mature virions have a weakened organization compared to the unmature virions, thereby facilitating subsequent uncoating. Without maturation, the particle lacks infectivity and is unable to uncoat. Late in adenovirus infection, in the cytoplasm, may participate in the cytoskeleton destruction. Cleaves host cell cytoskeletal keratins K7 and K18. In Fowl adenovirus A serotype 1 (strain CELO / Phelps) (FAdV-1), this protein is Protease.